Reading from the N-terminus, the 558-residue chain is Formate--tetrahydrofolate ligase (558 aa).

ATP is bound at residue 66 to 73; sequence TPAGEGKT.

It belongs to the formate--tetrahydrofolate ligase family.

The enzyme catalyses (6S)-5,6,7,8-tetrahydrofolate + formate + ATP = (6R)-10-formyltetrahydrofolate + ADP + phosphate. It functions in the pathway one-carbon metabolism; tetrahydrofolate interconversion. The protein is Formate--tetrahydrofolate ligase of Neisseria meningitidis serogroup C (strain 053442).